The following is a 306-amino-acid chain: Glutamyl-Q tRNA(Asp) synthetase (306 aa).

Residues Arg-29–Ser-33 and Asp-65 contribute to the L-glutamate site. Positions Pro-32–Asn-42 match the 'HIGH' region motif. The Zn(2+) site is built by Cys-121, Cys-123, Tyr-141, and Cys-145. L-glutamate contacts are provided by Tyr-188 and Arg-206. The 'KMSKS' region motif lies at Lys-244–Arg-248. ATP is bound at residue Lys-247.

It belongs to the class-I aminoacyl-tRNA synthetase family. GluQ subfamily. Zn(2+) serves as cofactor.

Functionally, catalyzes the tRNA-independent activation of glutamate in presence of ATP and the subsequent transfer of glutamate onto a tRNA(Asp). Glutamate is transferred on the 2-amino-5-(4,5-dihydroxy-2-cyclopenten-1-yl) moiety of the queuosine in the wobble position of the QUC anticodon. This is Glutamyl-Q tRNA(Asp) synthetase from Prochlorococcus marinus (strain MIT 9303).